Here is a 449-residue protein sequence, read N- to C-terminus: Elongation factor 1-alpha (449 aa).

A tr-type G domain is found at 5 to 230 (KVHMNLVVVG…DMLEPPVRPS (226 aa)). The interval 14-21 (GHVDAGKS) is G1. Residue 14 to 21 (GHVDAGKS) participates in GTP binding. Residues 70-74 (GITID) form a G2 region. Residues 91–94 (DAPG) form a G3 region. GTP contacts are provided by residues 91–95 (DAPGH) and 153–156 (NKMD). The tract at residues 153–156 (NKMD) is G4. Positions 194-196 (SGW) are G5. Position 362 is a 5-glutamyl glycerylphosphorylethanolamine (Glu-362).

Belongs to the TRAFAC class translation factor GTPase superfamily. Classic translation factor GTPase family. EF-Tu/EF-1A subfamily. Phosphatidylethanolamine (PE) is a direct precursor of the ethanolamine-phosphoglycerol (EPG) moiety.

The protein localises to the cytoplasm. Functionally, this protein promotes the GTP-dependent binding of aminoacyl-tRNA to the A-site of ribosomes during protein biosynthesis. The polypeptide is Elongation factor 1-alpha (TEF1) (Trypanosoma brucei brucei).